Here is a 62-residue protein sequence, read N- to C-terminus: Conotoxin Pn-B0151 (62 aa).

Residues 1–22 (MRCLPVFVILLLLIASTPSVDA) form the signal peptide. The propeptide occupies 23–48 (LQKTKDDMPLASFHDNVKRILQTLSN).

This sequence belongs to the conotoxin T superfamily. Post-translationally, contains 2 disulfide bonds that can be either 'C1-C3, C2-C4' or 'C1-C4, C2-C3', since these disulfide connectivities have been observed for conotoxins with cysteine framework V (for examples, see AC P0DQQ7 and AC P81755). Expressed by the venom duct.

It localises to the secreted. The polypeptide is Conotoxin Pn-B0151 (Conus pennaceus (Feathered cone)).